The primary structure comprises 256 residues: Imidazole glycerol phosphate synthase subunit HisF (256 aa).

Catalysis depends on residues aspartate 11 and aspartate 130.

The protein belongs to the HisA/HisF family. Heterodimer of HisH and HisF.

It localises to the cytoplasm. The catalysed reaction is 5-[(5-phospho-1-deoxy-D-ribulos-1-ylimino)methylamino]-1-(5-phospho-beta-D-ribosyl)imidazole-4-carboxamide + L-glutamine = D-erythro-1-(imidazol-4-yl)glycerol 3-phosphate + 5-amino-1-(5-phospho-beta-D-ribosyl)imidazole-4-carboxamide + L-glutamate + H(+). Its pathway is amino-acid biosynthesis; L-histidine biosynthesis; L-histidine from 5-phospho-alpha-D-ribose 1-diphosphate: step 5/9. In terms of biological role, IGPS catalyzes the conversion of PRFAR and glutamine to IGP, AICAR and glutamate. The HisF subunit catalyzes the cyclization activity that produces IGP and AICAR from PRFAR using the ammonia provided by the HisH subunit. The protein is Imidazole glycerol phosphate synthase subunit HisF of Prochlorococcus marinus (strain NATL1A).